The primary structure comprises 407 residues: Tyrosine--tRNA ligase (407 aa).

Tyrosine 35 contributes to the L-tyrosine binding site. A 'HIGH' region motif is present at residues 40–49; sequence PTADSLHVGH. The L-tyrosine site is built by tyrosine 168 and glutamine 172. The 'KMSKS' region signature appears at 228–232; it reads KMGKT. Residue lysine 231 participates in ATP binding. The S4 RNA-binding domain maps to 341 to 405; that stretch reads NSLVDLLAKC…RGKKNFNRIV (65 aa).

Belongs to the class-I aminoacyl-tRNA synthetase family. TyrS type 1 subfamily. In terms of assembly, homodimer.

The protein resides in the cytoplasm. The enzyme catalyses tRNA(Tyr) + L-tyrosine + ATP = L-tyrosyl-tRNA(Tyr) + AMP + diphosphate + H(+). Functionally, catalyzes the attachment of tyrosine to tRNA(Tyr) in a two-step reaction: tyrosine is first activated by ATP to form Tyr-AMP and then transferred to the acceptor end of tRNA(Tyr). This chain is Tyrosine--tRNA ligase, found in Clostridium botulinum (strain Loch Maree / Type A3).